Reading from the N-terminus, the 117-residue chain is MVQRLTYRRTVSYNTTSNKTRLSRTPGNRIVYLYTKKTGKAPKSACGICPGRLRGIRAVRPQVLMRLSKTKKHVSRAYGGSMCAKCVRDRIKRAFLIEEQKIVVKVLKAQAQSQKAK.

This sequence belongs to the eukaryotic ribosomal protein eL34 family. Component of the large ribosomal subunit.

The protein localises to the cytoplasm. Its subcellular location is the cytosol. It is found in the endoplasmic reticulum. Component of the large ribosomal subunit. The ribosome is a large ribonucleoprotein complex responsible for the synthesis of proteins in the cell. In Ictalurus punctatus (Channel catfish), this protein is Large ribosomal subunit protein eL34 (rpl34).